The sequence spans 99 residues: Aspartyl/glutamyl-tRNA(Asn/Gln) amidotransferase subunit C (99 aa).

It belongs to the GatC family. As to quaternary structure, heterotrimer of A, B and C subunits.

The catalysed reaction is L-glutamyl-tRNA(Gln) + L-glutamine + ATP + H2O = L-glutaminyl-tRNA(Gln) + L-glutamate + ADP + phosphate + H(+). It catalyses the reaction L-aspartyl-tRNA(Asn) + L-glutamine + ATP + H2O = L-asparaginyl-tRNA(Asn) + L-glutamate + ADP + phosphate + 2 H(+). Functionally, allows the formation of correctly charged Asn-tRNA(Asn) or Gln-tRNA(Gln) through the transamidation of misacylated Asp-tRNA(Asn) or Glu-tRNA(Gln) in organisms which lack either or both of asparaginyl-tRNA or glutaminyl-tRNA synthetases. The reaction takes place in the presence of glutamine and ATP through an activated phospho-Asp-tRNA(Asn) or phospho-Glu-tRNA(Gln). The sequence is that of Aspartyl/glutamyl-tRNA(Asn/Gln) amidotransferase subunit C from Polaromonas sp. (strain JS666 / ATCC BAA-500).